A 362-amino-acid chain; its full sequence is Histidinol-phosphate aminotransferase (362 aa).

Lysine 210 carries the N6-(pyridoxal phosphate)lysine modification.

This sequence belongs to the class-II pyridoxal-phosphate-dependent aminotransferase family. Histidinol-phosphate aminotransferase subfamily. As to quaternary structure, homodimer. It depends on pyridoxal 5'-phosphate as a cofactor.

The enzyme catalyses L-histidinol phosphate + 2-oxoglutarate = 3-(imidazol-4-yl)-2-oxopropyl phosphate + L-glutamate. The protein operates within amino-acid biosynthesis; L-histidine biosynthesis; L-histidine from 5-phospho-alpha-D-ribose 1-diphosphate: step 7/9. This is Histidinol-phosphate aminotransferase from Rhodopirellula baltica (strain DSM 10527 / NCIMB 13988 / SH1).